We begin with the raw amino-acid sequence, 410 residues long: Cytochrome P450(MEG) (410 aa).

A heme-binding site is contributed by cysteine 355.

Belongs to the cytochrome P450 family. Heme serves as cofactor.

It is found in the cytoplasm. It carries out the reaction reduced 2[4Fe-4S]-[ferredoxin] + progesterone + O2 + 2 H(+) = 15beta-hydroxyprogesterone + oxidized 2[4Fe-4S]-[ferredoxin] + H2O. In terms of biological role, has the capacity to hydroxylate certain steroids in the 15-beta position. Also hydroxylates progesterone in the 11-alpha and 9-beta position. The sequence is that of Cytochrome P450(MEG) (cyp106A2) from Priestia megaterium (Bacillus megaterium).